We begin with the raw amino-acid sequence, 570 residues long: Urease subunit alpha (570 aa).

The Urease domain maps to 131–570 (GGMDSHIHFI…LPMAQRYFLF (440 aa)). Ni(2+)-binding residues include H136, H138, and K219. Residue K219 is modified to N6-carboxylysine. Position 221 (H221) interacts with substrate. 2 residues coordinate Ni(2+): H248 and H274. H322 (proton donor) is an active-site residue. A Ni(2+)-binding site is contributed by D362.

The protein belongs to the metallo-dependent hydrolases superfamily. Urease alpha subunit family. As to quaternary structure, heterotrimer of UreA (gamma), UreB (beta) and UreC (alpha) subunits. Three heterotrimers associate to form the active enzyme. Requires Ni cation as cofactor. Carboxylation allows a single lysine to coordinate two nickel ions.

It localises to the cytoplasm. It carries out the reaction urea + 2 H2O + H(+) = hydrogencarbonate + 2 NH4(+). The protein operates within nitrogen metabolism; urea degradation; CO(2) and NH(3) from urea (urease route): step 1/1. This Rhizobium etli (strain ATCC 51251 / DSM 11541 / JCM 21823 / NBRC 15573 / CFN 42) protein is Urease subunit alpha.